Reading from the N-terminus, the 204-residue chain is Cytochrome c biogenesis ATP-binding export protein CcmA (204 aa).

An ABC transporter domain is found at 3 to 204 (LSGHGLRCVR…ARELRIGGTT (202 aa)). An ATP-binding site is contributed by 35-42 (GPNGAGKT).

The protein belongs to the ABC transporter superfamily. CcmA exporter (TC 3.A.1.107) family. In terms of assembly, the complex is composed of two ATP-binding proteins (CcmA) and two transmembrane proteins (CcmB).

It localises to the cell inner membrane. The enzyme catalyses heme b(in) + ATP + H2O = heme b(out) + ADP + phosphate + H(+). Functionally, part of the ABC transporter complex CcmAB involved in the biogenesis of c-type cytochromes; once thought to export heme, this seems not to be the case, but its exact role is uncertain. Responsible for energy coupling to the transport system. The chain is Cytochrome c biogenesis ATP-binding export protein CcmA from Nitrobacter hamburgensis (strain DSM 10229 / NCIMB 13809 / X14).